A 395-amino-acid chain; its full sequence is Putative 8-amino-7-oxononanoate synthase (395 aa).

Arg-23 contributes to the substrate binding site. 110 to 111 contributes to the pyridoxal 5'-phosphate binding site; sequence GY. Residue His-135 coordinates substrate. Residues Ser-182, 207 to 210, and 239 to 242 contribute to the pyridoxal 5'-phosphate site; these read DEAH and TFSK. Lys-242 carries the N6-(pyridoxal phosphate)lysine modification. Thr-356 provides a ligand contact to substrate.

Belongs to the class-II pyridoxal-phosphate-dependent aminotransferase family. BioF subfamily. As to quaternary structure, homodimer. Pyridoxal 5'-phosphate is required as a cofactor.

The catalysed reaction is 6-carboxyhexanoyl-[ACP] + L-alanine + H(+) = (8S)-8-amino-7-oxononanoate + holo-[ACP] + CO2. It functions in the pathway cofactor biosynthesis; biotin biosynthesis. Its function is as follows. Catalyzes the decarboxylative condensation of pimeloyl-[acyl-carrier protein] and L-alanine to produce 8-amino-7-oxononanoate (AON), [acyl-carrier protein], and carbon dioxide. In Bacillus mycoides (strain KBAB4) (Bacillus weihenstephanensis), this protein is Putative 8-amino-7-oxononanoate synthase (bioF).